Reading from the N-terminus, the 87-residue chain is Small ribosomal subunit protein uS17 (87 aa).

Belongs to the universal ribosomal protein uS17 family. As to quaternary structure, part of the 30S ribosomal subunit.

Its function is as follows. One of the primary rRNA binding proteins, it binds specifically to the 5'-end of 16S ribosomal RNA. In Bacillus cereus (strain ATCC 14579 / DSM 31 / CCUG 7414 / JCM 2152 / NBRC 15305 / NCIMB 9373 / NCTC 2599 / NRRL B-3711), this protein is Small ribosomal subunit protein uS17.